Consider the following 116-residue polypeptide: Ribosome-binding factor A (116 aa).

It belongs to the RbfA family. As to quaternary structure, monomer. Binds 30S ribosomal subunits, but not 50S ribosomal subunits or 70S ribosomes.

The protein localises to the cytoplasm. One of several proteins that assist in the late maturation steps of the functional core of the 30S ribosomal subunit. Associates with free 30S ribosomal subunits (but not with 30S subunits that are part of 70S ribosomes or polysomes). Required for efficient processing of 16S rRNA. May interact with the 5'-terminal helix region of 16S rRNA. In Pediococcus pentosaceus (strain ATCC 25745 / CCUG 21536 / LMG 10740 / 183-1w), this protein is Ribosome-binding factor A.